The following is a 614-amino-acid chain: Dihydroxy-acid dehydratase (614 aa).

D81 contacts Mg(2+). C122 serves as a coordination point for [2Fe-2S] cluster. Mg(2+) is bound by residues D123 and K124. Residue K124 is modified to N6-carboxylysine. C193 serves as a coordination point for [2Fe-2S] cluster. Residue E489 participates in Mg(2+) binding. S515 acts as the Proton acceptor in catalysis.

The protein belongs to the IlvD/Edd family. Homodimer. [2Fe-2S] cluster serves as cofactor. Requires Mg(2+) as cofactor.

It catalyses the reaction (2R)-2,3-dihydroxy-3-methylbutanoate = 3-methyl-2-oxobutanoate + H2O. The enzyme catalyses (2R,3R)-2,3-dihydroxy-3-methylpentanoate = (S)-3-methyl-2-oxopentanoate + H2O. The protein operates within amino-acid biosynthesis; L-isoleucine biosynthesis; L-isoleucine from 2-oxobutanoate: step 3/4. It functions in the pathway amino-acid biosynthesis; L-valine biosynthesis; L-valine from pyruvate: step 3/4. Functions in the biosynthesis of branched-chain amino acids. Catalyzes the dehydration of (2R,3R)-2,3-dihydroxy-3-methylpentanoate (2,3-dihydroxy-3-methylvalerate) into 2-oxo-3-methylpentanoate (2-oxo-3-methylvalerate) and of (2R)-2,3-dihydroxy-3-methylbutanoate (2,3-dihydroxyisovalerate) into 2-oxo-3-methylbutanoate (2-oxoisovalerate), the penultimate precursor to L-isoleucine and L-valine, respectively. The protein is Dihydroxy-acid dehydratase of Saccharophagus degradans (strain 2-40 / ATCC 43961 / DSM 17024).